The chain runs to 782 residues: Endonuclease MutS2 (782 aa).

336 to 343 (GPNTGGKT) provides a ligand contact to ATP. In terms of domain architecture, Smr spans 707 to 782 (LDLRGYRYEE…GFGVTVAELK (76 aa)).

It belongs to the DNA mismatch repair MutS family. MutS2 subfamily. In terms of assembly, homodimer. Binds to stalled ribosomes, contacting rRNA.

In terms of biological role, endonuclease that is involved in the suppression of homologous recombination and thus may have a key role in the control of bacterial genetic diversity. Its function is as follows. Acts as a ribosome collision sensor, splitting the ribosome into its 2 subunits. Detects stalled/collided 70S ribosomes which it binds and splits by an ATP-hydrolysis driven conformational change. Acts upstream of the ribosome quality control system (RQC), a ribosome-associated complex that mediates the extraction of incompletely synthesized nascent chains from stalled ribosomes and their subsequent degradation. Probably generates substrates for RQC. The polypeptide is Endonuclease MutS2 (Staphylococcus epidermidis (strain ATCC 35984 / DSM 28319 / BCRC 17069 / CCUG 31568 / BM 3577 / RP62A)).